A 201-amino-acid chain; its full sequence is ATP-dependent Clp protease proteolytic subunit 1 (201 aa).

The Nucleophile role is filled by Ser102. Residue His127 is part of the active site.

This sequence belongs to the peptidase S14 family. Fourteen ClpP subunits assemble into 2 heptameric rings which stack back to back to give a disk-like structure with a central cavity, resembling the structure of eukaryotic proteasomes.

It is found in the cytoplasm. It carries out the reaction Hydrolysis of proteins to small peptides in the presence of ATP and magnesium. alpha-casein is the usual test substrate. In the absence of ATP, only oligopeptides shorter than five residues are hydrolyzed (such as succinyl-Leu-Tyr-|-NHMec, and Leu-Tyr-Leu-|-Tyr-Trp, in which cleavage of the -Tyr-|-Leu- and -Tyr-|-Trp bonds also occurs).. In terms of biological role, cleaves peptides in various proteins in a process that requires ATP hydrolysis. Has a chymotrypsin-like activity. Plays a major role in the degradation of misfolded proteins. The chain is ATP-dependent Clp protease proteolytic subunit 1 from Mesorhizobium japonicum (strain LMG 29417 / CECT 9101 / MAFF 303099) (Mesorhizobium loti (strain MAFF 303099)).